The chain runs to 253 residues: MRILLTNDDGVHAPGLAALRQQLRHLGEVITVAPATEQSGVGHSITYLTPLVPKSIHRDGVHWAWAVEGSPADCVKLSLAELFVDEPIDLVVSGINNGLNAGINVLYSGTVAAAIEGAFFGVTSVAVSLENSDDNDFDAAAVIARNVIGEIVRHEESRGGLFNLNVPTAATESASEVKVVPMGLAQYGRRYEKRQDPGGRDYYWALWTQPDKPPAEMTDVTQLREGCVTLTPLHFNLTRDDLLSEMKDWNLRP.

Asp8, Asp9, Ser39, and Asn96 together coordinate a divalent metal cation.

This sequence belongs to the SurE nucleotidase family. The cofactor is a divalent metal cation.

The protein resides in the cytoplasm. The catalysed reaction is a ribonucleoside 5'-phosphate + H2O = a ribonucleoside + phosphate. Functionally, nucleotidase that shows phosphatase activity on nucleoside 5'-monophosphates. In Rhodopirellula baltica (strain DSM 10527 / NCIMB 13988 / SH1), this protein is 5'-nucleotidase SurE.